The primary structure comprises 429 residues: MSKKIQSVRGMNDYLPVETAVWQRVERIIKSVVESYGYSEIRTPILEQTPLFKRAIGEVTDVVEKEMYTFNDRERDAKEVVSLTLRPEGTAGCVRAGIEHGLLYNQEQRLWYMGPMFRHERPQKGRYRQFHQIGLEVFGLQGPDIDAELIMLTARWWRELGISEHVTLELNSIGSLEARANYRDALVAFLEQHKEKLDEDCKRRMYTNPLRVLDSKNPEVQALLNDAPALGDYLDEESREHFAGLCKLLESAGIAYTVNQRLVRGLDYYNRTVFEWVTNSLGSQGTVCAGGRYDGLVEQLGGRATSAVGFAMGLERLVLLVQAVNPEFKADPVVDIYLVASGADTQPAAMALAERLRDELPGVKLMTNHGGGNFKKQFGRADKWGARIAVVLGESEVANGTAVVKDLRSGEQTAVAQDSVAAHLRTLLG.

The protein belongs to the class-II aminoacyl-tRNA synthetase family. Homodimer.

Its subcellular location is the cytoplasm. The catalysed reaction is tRNA(His) + L-histidine + ATP = L-histidyl-tRNA(His) + AMP + diphosphate + H(+). This is Histidine--tRNA ligase from Escherichia fergusonii (strain ATCC 35469 / DSM 13698 / CCUG 18766 / IAM 14443 / JCM 21226 / LMG 7866 / NBRC 102419 / NCTC 12128 / CDC 0568-73).